The chain runs to 678 residues: uncharacterized protein (678 aa).

A run of 8 helical transmembrane segments spans residues 228–250 (FFVILILGAVITLLLSLAIFSFL), 263–285 (LAMWWLPAILGVLSVCSVFVATQ), 300–322 (STGALPLLALIVKHSIAIALSCV), 334–356 (MLHNGFIGGYLASTLCLLYAVLF), 361–380 (FSLSAVFALEYALSLVFFSA), 387–405 (RIMLAMMFLLFAPFLYAYL), 420–439 (NVFFALGCVPFMLFMLTLFF), and 455–477 (NLLLSGALLTVLVINGVLWSVSL). Positions 653–678 (PSSQGVHATPEKNACIRDETVPNLQE) are disordered.

The protein resides in the cell membrane. This is an uncharacterized protein from Treponema pallidum (strain Nichols).